Here is a 40-residue protein sequence, read N- to C-terminus: Snaclec tokaracetin subunit alpha (40 aa).

In terms of domain architecture, C-type lectin spans 1–40; that stretch reads DCPSGWSSFKQYCYKPFKQLKTWEDAERFCLEQVKGAHLV. An intrachain disulfide couples C2 to C13.

The protein belongs to the snaclec family. As to quaternary structure, heterodimer of subunits alpha and beta; disulfide-linked. Expressed by the venom gland.

It is found in the secreted. In terms of biological role, platelet antagonist that specifically and reversibly binds to a site on platelet glycoprotein Ibalpha (GP1BA) close to or identical with the site for vWF binding. It inhibits the binding of vWF to platelets and vWF-dependent shear-induced platelet aggregation. This is Snaclec tokaracetin subunit alpha from Protobothrops tokarensis (Tokara habu).